The chain runs to 490 residues: Betaine aldehyde dehydrogenase (490 aa).

K(+) contacts are provided by Thr-26, Ile-27, and Asp-93. 150–152 (GAW) contacts NAD(+). The active-site Charge relay system is the Lys-162. 176-179 (KPSE) is a binding site for NAD(+). Val-180 provides a ligand contact to K(+). Position 230–233 (230–233 (GTST)) interacts with NAD(+). Leu-246 is a K(+) binding site. The active-site Proton acceptor is the Glu-252. Positions 254, 286, and 387 each coordinate NAD(+). Cys-286 acts as the Nucleophile in catalysis. The residue at position 286 (Cys-286) is a Cysteine sulfenic acid (-SOH). K(+)-binding residues include Lys-457 and Gly-460. Glu-464 functions as the Charge relay system in the catalytic mechanism.

This sequence belongs to the aldehyde dehydrogenase family. In terms of assembly, dimer of dimers. Requires K(+) as cofactor.

It carries out the reaction betaine aldehyde + NAD(+) + H2O = glycine betaine + NADH + 2 H(+). Its pathway is amine and polyamine biosynthesis; betaine biosynthesis via choline pathway; betaine from betaine aldehyde: step 1/1. Its function is as follows. Involved in the biosynthesis of the osmoprotectant glycine betaine. Catalyzes the irreversible oxidation of betaine aldehyde to the corresponding acid. This Pseudomonas paraeruginosa (strain DSM 24068 / PA7) (Pseudomonas aeruginosa (strain PA7)) protein is Betaine aldehyde dehydrogenase.